The chain runs to 326 residues: Cytosolic sulfotransferase 12 (326 aa).

Position 75-80 (75-80 (KSGTTW)) interacts with 3'-phosphoadenylyl sulfate. The active-site Proton acceptor is H140. Residues R162, S170, Y228, and 290-292 (RKG) each bind 3'-phosphoadenylyl sulfate.

The protein belongs to the sulfotransferase 1 family. Dimer. As to expression, expressed in the aerial parts of seedlings, in roots, leaves and flowers. Not detected in stems and siliques.

It is found in the cytoplasm. Functionally, sulfotransferase that utilizes 3'-phospho-5'-adenylyl sulfate (PAPS) as sulfonate donor to catalyze the stereospecific sulfate conjugation of 24-epibrassinosteroids. Preferred substrates are 24-epicathasterone and 6-deoxo-24-epicathasterone. Low activity with 22-deoxy-24-epiteasterone. No activity with 24-epimers catasterone and brassinolide. Sulfonates salicylic acid. May be involved in detoxification. Enhances plant response to pathogen infection and contributes to long distance signaling in systemic acquired resistance (SAR). The sequence is that of Cytosolic sulfotransferase 12 (SOT12) from Arabidopsis thaliana (Mouse-ear cress).